An 899-amino-acid chain; its full sequence is Protein translocase subunit SecA (899 aa).

ATP contacts are provided by residues Gln89, Gly107–Thr111, and Asp502. Zn(2+) is bound by residues Cys882, Cys884, Cys893, and His894.

Belongs to the SecA family. In terms of assembly, monomer and homodimer. Part of the essential Sec protein translocation apparatus which comprises SecA, SecYEG and auxiliary proteins SecDF-YajC and YidC. The cofactor is Zn(2+).

It localises to the cell inner membrane. The protein localises to the cytoplasm. The enzyme catalyses ATP + H2O + cellular proteinSide 1 = ADP + phosphate + cellular proteinSide 2.. Part of the Sec protein translocase complex. Interacts with the SecYEG preprotein conducting channel. Has a central role in coupling the hydrolysis of ATP to the transfer of proteins into and across the cell membrane, serving both as a receptor for the preprotein-SecB complex and as an ATP-driven molecular motor driving the stepwise translocation of polypeptide chains across the membrane. This chain is Protein translocase subunit SecA, found in Allorhizobium ampelinum (strain ATCC BAA-846 / DSM 112012 / S4) (Agrobacterium vitis (strain S4)).